Consider the following 932-residue polypeptide: DNA mismatch repair protein MutS (932 aa).

615–622 (GPNMAGKS) is an ATP binding site.

This sequence belongs to the DNA mismatch repair MutS family.

Its function is as follows. This protein is involved in the repair of mismatches in DNA. It is possible that it carries out the mismatch recognition step. This protein has a weak ATPase activity. The chain is DNA mismatch repair protein MutS from Clostridium botulinum (strain Hall / ATCC 3502 / NCTC 13319 / Type A).